A 164-amino-acid polypeptide reads, in one-letter code: Phosphopantetheine adenylyltransferase (164 aa).

Ser11 contacts substrate. ATP-binding positions include 11 to 12 and His19; that span reads SF. Substrate contacts are provided by Lys43, Leu75, and Arg89. ATP is bound by residues 90 to 92, Glu100, and 125 to 131; these read GLR and YGYLSSS.

Belongs to the bacterial CoaD family. Homohexamer. Mg(2+) is required as a cofactor.

The protein localises to the cytoplasm. It catalyses the reaction (R)-4'-phosphopantetheine + ATP + H(+) = 3'-dephospho-CoA + diphosphate. Its pathway is cofactor biosynthesis; coenzyme A biosynthesis; CoA from (R)-pantothenate: step 4/5. Reversibly transfers an adenylyl group from ATP to 4'-phosphopantetheine, yielding dephospho-CoA (dPCoA) and pyrophosphate. The sequence is that of Phosphopantetheine adenylyltransferase from Geobacter sulfurreducens (strain ATCC 51573 / DSM 12127 / PCA).